A 471-amino-acid polypeptide reads, in one-letter code: UDP-glycosyltransferase 1 (471 aa).

His-15 serves as the catalytic Proton acceptor. His-15 contributes to the an anthocyanidin binding site. The active-site Charge relay is the Asp-124. Residues Thr-146, Ala-348, Gln-350, His-365, Trp-368, Asn-369, Ser-370, and Glu-373 each coordinate UDP-alpha-D-glucose. Residue Ala-388 coordinates an anthocyanidin. UDP-alpha-D-glucose-binding residues include Glu-389 and Gln-390.

Belongs to the UDP-glycosyltransferase family. In terms of tissue distribution, expressed in roots. Detected in stems and leaves.

The catalysed reaction is a 7-hydroxyisoflavone + UDP-alpha-D-glucose = a 7-hydroxyisoflavone 7-O-beta-D-glucoside + UDP + H(+). In terms of biological role, isoflavone 7-O-glucosyltransferase converting daidzein to daidzin, genistein to genistin and formononetin to ononin. Shows some activity toward the chalcone isoliquiritigenin, the flavanones liquiritigenin and naringenin, and the flavone apigenin, but not toward cyanidin, luteolin, kaempferol, quercetin, daidzin and puerarin. This is UDP-glycosyltransferase 1 from Pueraria montana var. lobata (Kudzu vine).